We begin with the raw amino-acid sequence, 168 residues long: ATP synthase subunit b (168 aa).

A helical transmembrane segment spans residues 9–29 (LFNLSTFVFTIINLLVLYYIL).

The protein belongs to the ATPase B chain family. In terms of assembly, F-type ATPases have 2 components, F(1) - the catalytic core - and F(0) - the membrane proton channel. F(1) has five subunits: alpha(3), beta(3), gamma(1), delta(1), epsilon(1). F(0) has three main subunits: a(1), b(2) and c(10-14). The alpha and beta chains form an alternating ring which encloses part of the gamma chain. F(1) is attached to F(0) by a central stalk formed by the gamma and epsilon chains, while a peripheral stalk is formed by the delta and b chains.

The protein resides in the cell membrane. Functionally, f(1)F(0) ATP synthase produces ATP from ADP in the presence of a proton or sodium gradient. F-type ATPases consist of two structural domains, F(1) containing the extramembraneous catalytic core and F(0) containing the membrane proton channel, linked together by a central stalk and a peripheral stalk. During catalysis, ATP synthesis in the catalytic domain of F(1) is coupled via a rotary mechanism of the central stalk subunits to proton translocation. Component of the F(0) channel, it forms part of the peripheral stalk, linking F(1) to F(0). The protein is ATP synthase subunit b of Caldanaerobacter subterraneus subsp. tengcongensis (strain DSM 15242 / JCM 11007 / NBRC 100824 / MB4) (Thermoanaerobacter tengcongensis).